A 164-amino-acid chain; its full sequence is Ribosome maturation factor RimP (164 aa).

The protein belongs to the RimP family.

Its subcellular location is the cytoplasm. Functionally, required for maturation of 30S ribosomal subunits. This chain is Ribosome maturation factor RimP, found in Mesoplasma florum (strain ATCC 33453 / NBRC 100688 / NCTC 11704 / L1) (Acholeplasma florum).